A 389-amino-acid polypeptide reads, in one-letter code: Probable tRNA pseudouridine synthase D 1 (389 aa).

The Nucleophile role is filled by Asp63. The TRUD domain occupies 135 to 345 (GAPNYYDDQR…KYTKRPIISI (211 aa)).

This sequence belongs to the pseudouridine synthase TruD family.

It carries out the reaction uridine(13) in tRNA = pseudouridine(13) in tRNA. Its function is as follows. Could be responsible for synthesis of pseudouridine from uracil-13 in transfer RNAs. The sequence is that of Probable tRNA pseudouridine synthase D 1 (truD1) from Methanococcus maripaludis (strain DSM 14266 / JCM 13030 / NBRC 101832 / S2 / LL).